Here is a 363-residue protein sequence, read N- to C-terminus: Aminomethyltransferase (363 aa).

The protein belongs to the GcvT family. In terms of assembly, the glycine cleavage system is composed of four proteins: P, T, L and H.

The catalysed reaction is N(6)-[(R)-S(8)-aminomethyldihydrolipoyl]-L-lysyl-[protein] + (6S)-5,6,7,8-tetrahydrofolate = N(6)-[(R)-dihydrolipoyl]-L-lysyl-[protein] + (6R)-5,10-methylene-5,6,7,8-tetrahydrofolate + NH4(+). The glycine cleavage system catalyzes the degradation of glycine. The chain is Aminomethyltransferase from Saccharophagus degradans (strain 2-40 / ATCC 43961 / DSM 17024).